Here is an 846-residue protein sequence, read N- to C-terminus: Translation initiation factor IF-2 (846 aa).

The segment at 94-263 (QRSPEEIQAE…HGFQNPTGPV (170 aa)) is disordered. Residues 96–135 (SPEEIQAEQKRELDERRAAENAARDKVEAEVRQRNEEQAR) are compositionally biased toward basic and acidic residues. 2 stretches are compositionally biased toward low complexity: residues 136-148 (RQAA…APAP) and 158-176 (AAPV…ASED). Composition is skewed to basic and acidic residues over residues 177–206 (AAAR…RGEA) and 230–239 (TTDEESDGAR). The span at 240–253 (RGRGGKSKLKKRNQ) shows a compositional bias: basic residues. Positions 346–513 (SRAPVVTVMG…AVLLQAEILE (168 aa)) constitute a tr-type G domain. Residues 355-362 (GHVDHGKT) are G1. 355–362 (GHVDHGKT) lines the GTP pocket. The segment at 380–384 (GITQH) is G2. The G3 stretch occupies residues 401 to 404 (DTPG). GTP is bound by residues 401-405 (DTPGH) and 455-458 (NKID). Residues 455-458 (NKID) are G4. Residues 491-493 (SAK) form a G5 region.

This sequence belongs to the TRAFAC class translation factor GTPase superfamily. Classic translation factor GTPase family. IF-2 subfamily.

The protein resides in the cytoplasm. One of the essential components for the initiation of protein synthesis. Protects formylmethionyl-tRNA from spontaneous hydrolysis and promotes its binding to the 30S ribosomal subunits. Also involved in the hydrolysis of GTP during the formation of the 70S ribosomal complex. This Pseudomonas putida (strain ATCC 47054 / DSM 6125 / CFBP 8728 / NCIMB 11950 / KT2440) protein is Translation initiation factor IF-2.